The chain runs to 230 residues: DNA mismatch repair protein MutH (230 aa).

The protein belongs to the MutH family.

Its subcellular location is the cytoplasm. Sequence-specific endonuclease that cleaves unmethylated GATC sequences. It is involved in DNA mismatch repair. This Citrobacter koseri (strain ATCC BAA-895 / CDC 4225-83 / SGSC4696) protein is DNA mismatch repair protein MutH.